The sequence spans 293 residues: Large ribosomal subunit protein uL4c (293 aa).

Residues 1–50 (MATSTSSSLSLSFFSSSLFSSKSRNFSSKPILKLPSSSHSQTSLSLSIKS) constitute a chloroplast transit peptide. Disordered regions lie at residues 107-138 (EVRG…PGGG) and 259-293 (YGVD…EPAE). A compositionally biased stretch (basic residues) spans 116–126 (YPQKKTGRARR). A compositionally biased stretch (acidic residues) spans 263-293 (TLEDEDEEEEEEEEGEEVDDGVEDGTPEPAE).

Belongs to the universal ribosomal protein uL4 family. As to quaternary structure, component of the chloroplast large ribosomal subunit (LSU). Mature 70S chloroplast ribosomes of higher plants consist of a small (30S) and a large (50S) subunit. The 30S small subunit contains 1 molecule of ribosomal RNA (16S rRNA) and 24 different proteins. The 50S large subunit contains 3 rRNA molecules (23S, 5S and 4.5S rRNA) and 33 different proteins. In terms of tissue distribution, highly expressed in cotyledon and weakly in roots.

The protein resides in the plastid. It is found in the chloroplast. In terms of biological role, component of the chloroplast ribosome (chloro-ribosome), a dedicated translation machinery responsible for the synthesis of chloroplast genome-encoded proteins, including proteins of the transcription and translation machinery and components of the photosynthetic apparatus. This Spinacia oleracea (Spinach) protein is Large ribosomal subunit protein uL4c (RPL4).